The following is a 172-amino-acid chain: Adenine phosphoribosyltransferase (172 aa).

It belongs to the purine/pyrimidine phosphoribosyltransferase family. Homodimer.

It localises to the cytoplasm. The catalysed reaction is AMP + diphosphate = 5-phospho-alpha-D-ribose 1-diphosphate + adenine. The protein operates within purine metabolism; AMP biosynthesis via salvage pathway; AMP from adenine: step 1/1. In terms of biological role, catalyzes a salvage reaction resulting in the formation of AMP, that is energically less costly than de novo synthesis. The sequence is that of Adenine phosphoribosyltransferase from Malacoplasma penetrans (strain HF-2) (Mycoplasma penetrans).